The primary structure comprises 558 residues: Glutamine--tRNA ligase (558 aa).

Positions 36 to 46 match the 'HIGH' region motif; it reads PEPNGYLHLGH. Residues 37–39 and 43–49 each bind ATP; these read EPN and HLGHAKS. The L-glutamine site is built by aspartate 69 and tyrosine 214. Residues threonine 233, 263 to 264, and 271 to 273 each bind ATP; these read RL and LSK. Residues 270-274 carry the 'KMSKS' region motif; it reads LLSKR.

The protein belongs to the class-I aminoacyl-tRNA synthetase family. In terms of assembly, monomer.

Its subcellular location is the cytoplasm. It carries out the reaction tRNA(Gln) + L-glutamine + ATP = L-glutaminyl-tRNA(Gln) + AMP + diphosphate. The protein is Glutamine--tRNA ligase of Nitrobacter hamburgensis (strain DSM 10229 / NCIMB 13809 / X14).